The sequence spans 462 residues: MKKFPKKLLPIAVLSSIAFSSLASGSVPEASAQEKKKGNQDEIKNVIVLIGDGMGVSYTSAYRYLKDNKKTKVVEPTAFDQYLVGQQTTYPDDPEQNVTDSAAAATAMSAGIKTYNNAIAVDNDGSEAKTVLEAAKEKGKATGLVATSEITHATPASFGSHDHSRKNMNSIADDYFDEMVNGKHKIDVLLGGGKSNFDRKDRNLIKEFKKAGYSYVDDRKDMLKNKDSQVLGLFADGGLPKKIDRTKDIPSLKDMTNTAIKKLNKDKDGFFLMVEGSQIDWAGHDNDIVGAMSEMEDFEQAYKAAIDFAKKDKHTLVVATADHSTGGYSIGADGIYNWFSEPIKAAKRTPDFMAEKIADGADVEKTLKTYIDQKKLALTKAEIQSVEEAAKSKEVLDIDNAIENIFNKRSHTGWTTGGHTGEDVPVYAYGPSSETFAGQIDNTEIAKNVFKALQYNIKINDK.

The first 32 residues, Met-1 to Ala-32, serve as a signal peptide directing secretion. A Mg(2+)-binding site is contributed by Asp-52. Residue Asp-52 participates in Zn(2+) binding. The active-site Phosphoserine intermediate is the Ser-101. Positions 154 and 275 each coordinate Mg(2+). The Zn(2+) site is built by Asp-280, His-284, Asp-322, His-323, and His-419.

It belongs to the alkaline phosphatase family. Monomer. Mg(2+) is required as a cofactor. Zn(2+) serves as cofactor.

It carries out the reaction a phosphate monoester + H2O = an alcohol + phosphate. This is Alkaline phosphatase 3 (phoB) from Bacillus subtilis (strain 168).